The following is a 424-amino-acid chain: Histidine--tRNA ligase (424 aa).

This sequence belongs to the class-II aminoacyl-tRNA synthetase family. In terms of assembly, homodimer.

The protein resides in the cytoplasm. The enzyme catalyses tRNA(His) + L-histidine + ATP = L-histidyl-tRNA(His) + AMP + diphosphate + H(+). The chain is Histidine--tRNA ligase from Escherichia coli O127:H6 (strain E2348/69 / EPEC).